The following is a 374-amino-acid chain: Chaperone protein DnaJ (374 aa).

Residues 4–68 (DYYDILGVSR…ETRARYDRFG (65 aa)) form the J domain. A CR-type zinc finger spans residues 133 to 215 (GGEKQIRITH…CGGNGQAQVT (83 aa)). Residues cysteine 146, cysteine 149, cysteine 163, cysteine 166, cysteine 189, cysteine 192, cysteine 203, and cysteine 206 each contribute to the Zn(2+) site. CXXCXGXG motif repeat units lie at residues 146-153 (CTTCNGSG), 163-170 (CGTCGGAG), 189-196 (CPTCNGKG), and 203-210 (CETCGGNG).

This sequence belongs to the DnaJ family. Homodimer. It depends on Zn(2+) as a cofactor.

It is found in the cytoplasm. In terms of biological role, participates actively in the response to hyperosmotic and heat shock by preventing the aggregation of stress-denatured proteins and by disaggregating proteins, also in an autonomous, DnaK-independent fashion. Unfolded proteins bind initially to DnaJ; upon interaction with the DnaJ-bound protein, DnaK hydrolyzes its bound ATP, resulting in the formation of a stable complex. GrpE releases ADP from DnaK; ATP binding to DnaK triggers the release of the substrate protein, thus completing the reaction cycle. Several rounds of ATP-dependent interactions between DnaJ, DnaK and GrpE are required for fully efficient folding. Also involved, together with DnaK and GrpE, in the DNA replication of plasmids through activation of initiation proteins. The chain is Chaperone protein DnaJ from Cyanothece sp. (strain PCC 7425 / ATCC 29141).